Consider the following 103-residue polypeptide: Large ribosomal subunit protein bL21 (103 aa).

Belongs to the bacterial ribosomal protein bL21 family. In terms of assembly, part of the 50S ribosomal subunit. Contacts protein L20.

Its function is as follows. This protein binds to 23S rRNA in the presence of protein L20. The chain is Large ribosomal subunit protein bL21 from Heliobacterium modesticaldum (strain ATCC 51547 / Ice1).